Reading from the N-terminus, the 914-residue chain is Protein translocase subunit SecA (914 aa).

ATP contacts are provided by residues Gln-87, 105-109 (GEGKT), and Asp-508. Zn(2+) is bound by residues Cys-898, Cys-900, Cys-909, and His-910.

The protein belongs to the SecA family. As to quaternary structure, monomer and homodimer. Part of the essential Sec protein translocation apparatus which comprises SecA, SecYEG and auxiliary proteins SecDF-YajC and YidC. It depends on Zn(2+) as a cofactor.

The protein localises to the cell inner membrane. The protein resides in the cytoplasm. It catalyses the reaction ATP + H2O + cellular proteinSide 1 = ADP + phosphate + cellular proteinSide 2.. Part of the Sec protein translocase complex. Interacts with the SecYEG preprotein conducting channel. Has a central role in coupling the hydrolysis of ATP to the transfer of proteins into and across the cell membrane, serving both as a receptor for the preprotein-SecB complex and as an ATP-driven molecular motor driving the stepwise translocation of polypeptide chains across the membrane. The sequence is that of Protein translocase subunit SecA from Xylella fastidiosa (strain M12).